The sequence spans 274 residues: 3-methyl-2-oxobutanoate hydroxymethyltransferase (274 aa).

Mg(2+) is bound by residues Asp-50 and Asp-89. Residues 50–51, Asp-89, and Lys-119 each bind 3-methyl-2-oxobutanoate; that span reads DS. Glu-121 lines the Mg(2+) pocket. Glu-188 acts as the Proton acceptor in catalysis.

This sequence belongs to the PanB family. As to quaternary structure, homodecamer; pentamer of dimers. Requires Mg(2+) as cofactor.

It localises to the cytoplasm. It catalyses the reaction 3-methyl-2-oxobutanoate + (6R)-5,10-methylene-5,6,7,8-tetrahydrofolate + H2O = 2-dehydropantoate + (6S)-5,6,7,8-tetrahydrofolate. The protein operates within cofactor biosynthesis; (R)-pantothenate biosynthesis; (R)-pantoate from 3-methyl-2-oxobutanoate: step 1/2. Its function is as follows. Catalyzes the reversible reaction in which hydroxymethyl group from 5,10-methylenetetrahydrofolate is transferred onto alpha-ketoisovalerate to form ketopantoate. This Methylorubrum populi (strain ATCC BAA-705 / NCIMB 13946 / BJ001) (Methylobacterium populi) protein is 3-methyl-2-oxobutanoate hydroxymethyltransferase.